A 608-amino-acid chain; its full sequence is UvrABC system protein C (608 aa).

One can recognise a GIY-YIG domain in the interval His15–Val93. In terms of domain architecture, UVR spans Arg203 to Val238.

It belongs to the UvrC family. As to quaternary structure, interacts with UvrB in an incision complex.

Its subcellular location is the cytoplasm. Its function is as follows. The UvrABC repair system catalyzes the recognition and processing of DNA lesions. UvrC both incises the 5' and 3' sides of the lesion. The N-terminal half is responsible for the 3' incision and the C-terminal half is responsible for the 5' incision. The polypeptide is UvrABC system protein C (Aliivibrio salmonicida (strain LFI1238) (Vibrio salmonicida (strain LFI1238))).